The primary structure comprises 276 residues: Rhomboid protease GlpG (276 aa).

The next 6 membrane-spanning stretches (helical) occupy residues Gly94 to Leu114, Ala142 to Gly162, Leu169 to Gln189, Phe192 to Trp212, Leu229 to Met249, and Ala250 to Leu270. Ser201 acts as the Nucleophile in catalysis. His254 is a catalytic residue.

Belongs to the peptidase S54 family.

The protein localises to the cell inner membrane. It catalyses the reaction Cleaves type-1 transmembrane domains using a catalytic dyad composed of serine and histidine that are contributed by different transmembrane domains.. Its function is as follows. Rhomboid-type serine protease that catalyzes intramembrane proteolysis. In Escherichia coli O45:K1 (strain S88 / ExPEC), this protein is Rhomboid protease GlpG.